The primary structure comprises 189 residues: UPF0340 protein EF_1967 (189 aa).

It belongs to the UPF0340 family.

In Enterococcus faecalis (strain ATCC 700802 / V583), this protein is UPF0340 protein EF_1967.